Reading from the N-terminus, the 528-residue chain is MPVTMSQAFIDNFLGNSPKWFKIAILSFLIINPIVFYINPFVAGWLLVIEFIFTLAMALKCYPLQPGGLLAIQAVAIGMTSPSQVFHEIEANLEVLLLLVFMVAGIYFMKQLLLFGFTKMITKVRSKIVVSLMFCTASAFLSAFLDALTVIAVIIAVAVGFYSIYHKVASGKTFNDDHDHTSDGQKQLCEEELEAFRGFLRNLLMHAGVGTALGGVCTMVGEPQNLIIAAQANWQFAEFAIRMSPVTVPVFFAGIFTCFLVEKFKIFGYGLQLPEAVHKILSDYEAHEDARRTNHDKMKLVVQAFIGIWLIVGLALHLASVGLIGLSVIILATAFNGVTNEHALGKAFEEALPFTALLAVFFAVVAVIIDQQLFAPVIQWALSYEGNTQLVIFYIANGLLSMVSDNVFVGTVYINEVKAALLSGQITRDQFDLLAVAINTGTNLPSVATPNGQAAFLFLLTSAIAPLIRLSYGRMVWMALPYTIVLSIVGVLAIELGGLEQMTQYFYDNQIITHHSIKDVVESAVSSH.

A run of 11 helical transmembrane segments spans residues 29-49 (LIINPIVFYINPFVAGWLLVI), 52-72 (IFTLAMALKCYPLQPGGLLAI), 95-115 (VLLLLVFMVAGIYFMKQLLLF), 139-159 (AFLSAFLDALTVIAVIIAVAV), 203-223 (LLMHAGVGTALGGVCTMVGEP), 248-268 (VPVFFAGIFTCFLVEKFKIFG), 304-324 (AFIGIWLIVGLALHLASVGLI), 349-369 (EEALPFTALLAVFFAVVAVII), 390-410 (LVIFYIANGLLSMVSDNVFVG), 448-468 (ATPNGQAAFLFLLTSAIAPLI), and 476-496 (VWMALPYTIVLSIVGVLAIEL).

It belongs to the NhaB Na(+)/H(+) (TC 2.A.34) antiporter family.

The protein localises to the cell inner membrane. It catalyses the reaction 2 Na(+)(in) + 3 H(+)(out) = 2 Na(+)(out) + 3 H(+)(in). Functionally, na(+)/H(+) antiporter that extrudes sodium in exchange for external protons. The sequence is that of Na(+)/H(+) antiporter NhaB from Shewanella woodyi (strain ATCC 51908 / MS32).